The chain runs to 100 residues: Putative septation protein SpoVG (100 aa).

It belongs to the SpoVG family.

Functionally, could be involved in septation. The polypeptide is Putative septation protein SpoVG (Staphylococcus haemolyticus (strain JCSC1435)).